The sequence spans 476 residues: Argininosuccinate lyase (476 aa).

This sequence belongs to the lyase 1 family. Argininosuccinate lyase subfamily.

The protein resides in the cytoplasm. It carries out the reaction 2-(N(omega)-L-arginino)succinate = fumarate + L-arginine. The protein operates within amino-acid biosynthesis; L-arginine biosynthesis; L-arginine from L-ornithine and carbamoyl phosphate: step 3/3. In Gluconacetobacter diazotrophicus (strain ATCC 49037 / DSM 5601 / CCUG 37298 / CIP 103539 / LMG 7603 / PAl5), this protein is Argininosuccinate lyase.